The primary structure comprises 579 residues: uncharacterized protein (579 aa).

3 consecutive transmembrane segments (helical) span residues 173–193 (IAMGLAGLAGGALIGLTGGLA), 196–216 (FVAAGLGTLFAGLGLGTMIGA), and 218–238 (YLGTLITSAPMITALFGGFGA).

This sequence belongs to the TMCO4 family.

Its subcellular location is the cytoplasm. It is found in the nucleus membrane. This is an uncharacterized protein from Schizosaccharomyces pombe (strain 972 / ATCC 24843) (Fission yeast).